The sequence spans 276 residues: Proteasome subunit beta type-8 (276 aa).

A propeptide spans 1–72 (MALLEVCGAP…KNIRKEMVHG (72 aa)) (removed in mature form). Thr73 functions as the Nucleophile in the catalytic mechanism.

The protein belongs to the peptidase T1B family. As to quaternary structure, the 26S proteasome consists of a 20S proteasome core and two 19S regulatory subunits. The 20S proteasome core is composed of 28 subunits that are arranged in four stacked rings, resulting in a barrel-shaped structure. The two end rings are each formed by seven alpha subunits, and the two central rings are each formed by seven beta subunits. The catalytic chamber with the active sites is on the inside of the barrel. Component of the immunoproteasome, where it displaces the equivalent housekeeping subunit PSMB5. Component of the spermatoproteasome, a form of the proteasome specifically found in testis. Directly interacts with POMP. Autocleaved. The resulting N-terminal Thr residue of the mature subunit is responsible for the nucleophile proteolytic activity.

The protein resides in the cytoplasm. It is found in the nucleus. It carries out the reaction Cleavage of peptide bonds with very broad specificity.. Its function is as follows. The proteasome is a multicatalytic proteinase complex which is characterized by its ability to cleave peptides with Arg, Phe, Tyr, Leu, and Glu adjacent to the leaving group at neutral or slightly basic pH. The proteasome has an ATP-dependent proteolytic activity. This subunit is involved in antigen processing to generate class I binding peptides. May participate in the generation of spliced peptides resulting from the ligation of two separate proteasomal cleavage products that are not contiguous in the parental protein. Required for adipocyte differentiation. The polypeptide is Proteasome subunit beta type-8 (PSMB8) (Canis lupus familiaris (Dog)).